We begin with the raw amino-acid sequence, 191 residues long: FDSFWFVQQWPPAVCSFQKSGSCPGSGLRTFTIHGLWPQGSGTSLTNCPQGSPFDITKISHLQSQLNTLWPNVLRANNQQFWSHEWTKHGTCSESTFNQAAYFKLAVDMRNNYDIIGALRPHAAGPNGRTKSRQAIKGFLKAKFGKFPGLRCRTDPQTKVSYLVQVVACFAQDGSTLIDCTRDTCGANFIF.

Glutamine 9 contributes to the RNA binding site. Cysteine 15 and cysteine 23 are joined by a disulfide. Residues histidine 34, 72-73 (NV), arginine 75, phenylalanine 81, 84-85 (HE), and 88-89 (KH) contribute to the RNA site. Histidine 34 functions as the Proton donor in the catalytic mechanism. 3 disulfides stabilise this stretch: cysteine 48–cysteine 92, cysteine 152–cysteine 185, and cysteine 169–cysteine 180. Residue glutamate 85 is part of the active site. The Proton acceptor role is filled by histidine 89.

This sequence belongs to the RNase T2 family.

It catalyses the reaction a ribonucleotidyl-ribonucleotide-RNA + H2O = a 3'-end 3'-phospho-ribonucleotide-RNA + a 5'-end dephospho-ribonucleoside-RNA + H(+). In terms of biological role, ribonuclease cleaving preferentially the 5'-side of uridine. The sequence is that of Ribonuclease MC from Momordica charantia (Bitter gourd).